The following is an 887-amino-acid chain: Valine--tRNA ligase (887 aa).

The 'HIGH' region signature appears at 45 to 55 (PNVTGILHMGH). The short motif at 528 to 532 (KMSKS) is the 'KMSKS' region element. Lysine 531 contributes to the ATP binding site. Residues 817–887 (TGLLNNEAEI…LKESLKSFEE (71 aa)) are a coiled coil.

It belongs to the class-I aminoacyl-tRNA synthetase family. ValS type 1 subfamily. As to quaternary structure, monomer.

It localises to the cytoplasm. The enzyme catalyses tRNA(Val) + L-valine + ATP = L-valyl-tRNA(Val) + AMP + diphosphate. Functionally, catalyzes the attachment of valine to tRNA(Val). As ValRS can inadvertently accommodate and process structurally similar amino acids such as threonine, to avoid such errors, it has a 'posttransfer' editing activity that hydrolyzes mischarged Thr-tRNA(Val) in a tRNA-dependent manner. The chain is Valine--tRNA ligase from Fusobacterium nucleatum subsp. nucleatum (strain ATCC 25586 / DSM 15643 / BCRC 10681 / CIP 101130 / JCM 8532 / KCTC 2640 / LMG 13131 / VPI 4355).